We begin with the raw amino-acid sequence, 616 residues long: D-glutamate cyclase, mitochondrial (616 aa).

The transit peptide at 1–28 (MPFTLHLRSRLPSAIRSLILQKKPNIRN) directs the protein to the mitochondrion.

This sequence belongs to the D-glutamate cyclase family.

It localises to the mitochondrion matrix. It carries out the reaction D-glutamate = 5-oxo-D-proline + H2O. D-glutamate cyclase that converts D-glutamate to 5-oxo-D-proline. The polypeptide is D-glutamate cyclase, mitochondrial (Homo sapiens (Human)).